We begin with the raw amino-acid sequence, 740 residues long: MTVKLDFEECLKDSPRFRASIELVETEVSELETRLEKLLKLGSCLLESGQHYLAAGRAFVVGICDLARLGPPEPMMAECLEKFTVSLNHKLDSHAELLDATQHTLQQQIQTLVKEGLRGFREARRDFWRGAENLEAALTHNAEVPRRRVQEAEEAGTALRTARAGYRSRALDYALQVNVIEDKRKFDIMEFVLRLVEAQATYFQQGHEELNRLAQYRKELGTQLHNLVLNSARQKRDMEQRHVLLKQKELGGEEPEPSLKEGPSGLVMEGHLFKRASNAFKTWSRRWFTIQNNQLVYQKKYKDPVTVVVDDLRLCTVKLCPDSERRFCFEVVSTSKSCFLQADSERLLQLWVSAVQSSIASAFSQAHLENSPRGPGQVSGYHAPGSAATLACGGAARGRESGGVGQVAAQVQSVDGNAQCCDCREPAPEWASINLGVTLCIQCSGIHRSLGVHFSKVRSLTLDSWEPELVKLMCELGNVIINQIYEARVEAMAVKKPGPSCSRQEKEAWIHAKYVEKKFLTKLPEIRGRRGGRGPPRGHPPVPPKPPIRPHSGIVRSKSECPSDDMGSLHPGALLFQAAGHPPSLPTMADALAHGADVNWVNVGQGNATPLIRATAANSLLACEFLLQNGANVNQADSAGRGPLHHATILGHTGLACLFLKRGADLGARDTEGRDPLTIAMETTNADIVTLLRLAKMREAEAAQGQAGDETYLDIFRDFSLMASDDPEKLSRRSHDLHTL.

Residues 1–226 enclose the BAR domain; sequence MTVKLDFEEC…RKELGTQLHN (226 aa). The segment at 1–382 is required for formation of endosomal tubules when overexpressed with PIP5K1C; it reads MTVKLDFEEC…RGPGQVSGYH (382 aa). A PH domain is found at 265-360; it reads GLVMEGHLFK…WVSAVQSSIA (96 aa). The region spanning 405–527 is the Arf-GAP domain; it reads GQVAAQVQSV…KFLTKLPEIR (123 aa). The tract at residues 405–740 is required for interaction with GULP1; that stretch reads GQVAAQVQSV…SRRSHDLHTL (336 aa). The C4-type zinc finger occupies 420–443; that stretch reads CCDCREPAPEWASINLGVTLCIQC. Tyr-485 carries the post-translational modification 3'-nitrotyrosine. Residues 525–562 form a disordered region; it reads EIRGRRGGRGPPRGHPPVPPKPPIRPHSGIVRSKSECP. A prevents interaction with ITGB1 when S-554 is not phosphorylated region spans residues 525–566; that stretch reads EIRGRRGGRGPPRGHPPVPPKPPIRPHSGIVRSKSECPSDDM. Residues 537-549 show a composition bias toward pro residues; that stretch reads RGHPPVPPKPPIR. ANK repeat units lie at residues 606 to 635, 639 to 668, and 672 to 702; these read GNATPLIRATAANSLLACEFLLQNGANVNQ, AGRGPLHHATILGHTGLACLFLKRGADLGA, and EGRDPLTIAMETTNADIVTLLRLAKMREAEA.

Banana-shaped homodimer laterally assembling into tetramers, the tetramers further pack helically onto the membrane. Interacts with GTP-bound ARF6. Interacts with third cytoplasmic loop of SLC2A4/GLUT4. Interacts with CLTC. Interacts with GULP1. Forms a complex with GDP-bound ARF6 and GULP1. Interacts with ITGB1; required for ITGB1 recycling.

It is found in the recycling endosome membrane. GAP activity stimulated by phosphatidylinositol 4,5-bisphosphate (PIP2) and phosphatidic acid. GTPase-activating protein (GAP) for ADP ribosylation factor 6 (ARF6) required for clathrin-dependent export of proteins from recycling endosomes to trans-Golgi network and cell surface. Required for regulated export of ITGB1 from recycling endosomes to the cell surface and ITGB1-dependent cell migration. The sequence is that of Arf-GAP with coiled-coil, ANK repeat and PH domain-containing protein 1 (Acap1) from Mus musculus (Mouse).